Reading from the N-terminus, the 31-residue chain is Cytochrome b6-f complex subunit 6 (31 aa).

Residues 4 to 26 (ITSYFGFLLAASTITPALLIGLN) traverse the membrane as a helical segment.

The protein belongs to the PetL family. As to quaternary structure, the 4 large subunits of the cytochrome b6-f complex are cytochrome b6, subunit IV (17 kDa polypeptide, PetD), cytochrome f and the Rieske protein, while the 4 small subunits are PetG, PetL, PetM and PetN. The complex functions as a dimer.

It localises to the plastid. Its subcellular location is the chloroplast thylakoid membrane. Its function is as follows. Component of the cytochrome b6-f complex, which mediates electron transfer between photosystem II (PSII) and photosystem I (PSI), cyclic electron flow around PSI, and state transitions. PetL is important for photoautotrophic growth as well as for electron transfer efficiency and stability of the cytochrome b6-f complex. In Calycanthus floridus var. glaucus (Eastern sweetshrub), this protein is Cytochrome b6-f complex subunit 6.